We begin with the raw amino-acid sequence, 693 residues long: Zinc finger BED domain-containing protein 5 (693 aa).

The BED-type zinc finger occupies 108–164; that stretch reads RKYDESYLSFGFTYFGNRDAPHAQCVLCKKILSNSSLAPSKLRRHLETKHAAYKDKD. Cys132, Cys135, His152, and His157 together coordinate Zn(2+).

In Homo sapiens (Human), this protein is Zinc finger BED domain-containing protein 5 (ZBED5).